Reading from the N-terminus, the 275-residue chain is Transcription factor JUNGBRUNNEN 1 (275 aa).

The disordered stretch occupies residues 1 to 24 (MSGEGNLGKDHEEENEAPLPGFRF). Residues 18–167 (PLPGFRFHPT…VWTLCRIFKR (150 aa)) enclose the NAC domain. A DNA-binding region spans residues 115–173 (VGLKKSLVYYLGSAGKGTKTDWMMHEFRLPSTTKTDSPAQQAEVWTLCRIFKRVTSQRN). A disordered region spans residues 191-219 (CSKTSSLDSDHTSHRTVDSMSHEPPLPQP). A compositionally biased stretch (basic and acidic residues) spans 198–211 (DSDHTSHRTVDSMS).

Expressed in roots, root caps, cotyledons, tips and margin of young leaves, senescent regions of fully expanded leaves and floral tissues, including old sepals, petals, staments, mature anthers and pollen grains. Not detected in the abscission zone of open flowers, emerging lateral roots and root meristematic zones.

Its subcellular location is the nucleus. Functionally, transcription factor that binds to the 5'- RRYGCCGT-3' consensus core sequence. Central longevity regulator. Negative regulator of leaf senescence. Modulates cellular H(2)O(2) levels and enhances tolerance to various abiotic stresses through the regulation of DREB2A. The sequence is that of Transcription factor JUNGBRUNNEN 1 (JUB1) from Arabidopsis thaliana (Mouse-ear cress).